A 689-amino-acid chain; its full sequence is PR domain zinc finger protein 8 (689 aa).

The 116-residue stretch at 16-131 (KAVQQCLTDI…KDEELLVWYG (116 aa)) folds into the SET domain. Tyr-130 lines the S-adenosyl-L-methionine pocket. The C2H2-type 1 zinc-finger motif lies at 155–183 (YTCLECSQRFQFEFPYVAHLRFRCPKRLH). 2 disordered regions span residues 185 to 333 (ADIS…VGGR) and 397 to 506 (SLQE…QPAR). Over residues 193 to 210 (QGGGVGTKDHGGGGGGGK) the composition is skewed to gly residues. 2 stretches are compositionally biased toward low complexity: residues 241–258 (PESS…AKPS) and 273–286 (GGSS…LSSG). A compositionally biased stretch (gly residues) spans 322–333 (EGGGGAGLVGGR). Residues 423–433 (STPAAASPVGA) show a composition bias toward low complexity. Positions 472-491 (TSGGGGTGAGAAGGAGGGQG) are enriched in gly residues. C2H2-type zinc fingers lie at residues 625–648 (NWCA…RSHH) and 666–688 (LKCP…MTSH).

Belongs to the class V-like SAM-binding methyltransferase superfamily. In terms of assembly, interacts with EPM2A and NHLRC1. This interaction sequesters EPM2A and NHLRC1 to the nucleus. Interacts with BHLHE22. Expressed in brain, heart, skeletal muscle, testes, prostate.

Its subcellular location is the nucleus. Probable histone methyltransferase, preferentially acting on 'Lys-9' of histone H3. Involved in the control of steroidogenesis through transcriptional repression of steroidogenesis marker genes such as CYP17A1 and LHCGR. Forms with BHLHE22 a transcriptional repressor complex controlling genes involved in neural development and neuronal differentiation. In the retina, it is required for rod bipolar and type 2 OFF-cone bipolar cell survival. This is PR domain zinc finger protein 8 (PRDM8) from Homo sapiens (Human).